We begin with the raw amino-acid sequence, 195 residues long: Thioredoxin reductase-like selenoprotein T (195 aa).

The N-terminal stretch at 1-19 (MRLLLLLLVAASAVVRSEA) is a signal peptide. Positions 46–49 (CVSU) form a cross-link, cysteinyl-selenocysteine (Cys-Sec). A non-standard amino acid (selenocysteine) is located at residue Sec-49. The chain crosses the membrane as a helical span at residues 85-103 (IASFLSVFKLVLIGLIIVG).

This sequence belongs to the SelWTH family. Selenoprotein T subfamily. In terms of processing, may contain a selenide-sulfide bond between Cys-46 and Sec-49. This bond is speculated to serve as redox-active pair. Ubiquitous. Highly expressed in the endocrine pancreas. Expressed at low levels in the adult brain.

Its subcellular location is the endoplasmic reticulum membrane. It carries out the reaction [thioredoxin]-dithiol + NADP(+) = [thioredoxin]-disulfide + NADPH + H(+). Functionally, selenoprotein with thioredoxin reductase-like oxidoreductase activity. Protects dopaminergic neurons against oxidative stress and cell death. Involved in ADCYAP1/PACAP-induced calcium mobilization and neuroendocrine secretion. Plays a role in fibroblast anchorage and redox regulation. In gastric smooth muscle, modulates the contraction processes through the regulation of calcium release and MYLK activation. In pancreatic islets, involved in the control of glucose homeostasis, contributes to prolonged ADCYAP1/PACAP-induced insulin secretion. This chain is Thioredoxin reductase-like selenoprotein T, found in Mus musculus (Mouse).